We begin with the raw amino-acid sequence, 52 residues long: UPF0391 membrane protein Tgr7_2500 (52 aa).

The next 2 helical transmembrane spans lie at 4–24 and 29–49; these read WALI…SGVA and WIAQ…LLGG.

This sequence belongs to the UPF0391 family.

The protein resides in the cell membrane. The protein is UPF0391 membrane protein Tgr7_2500 of Thioalkalivibrio sulfidiphilus (strain HL-EbGR7).